Here is a 147-residue protein sequence, read N- to C-terminus: Lysozyme C-3 (147 aa).

A signal peptide spans 1–18 (MKALIILGFLFLSVAVQG). The C-type lysozyme domain occupies 19-147 (KVFERCELAR…VSSYVQGCTL (129 aa)). 4 cysteine pairs are disulfide-bonded: cysteine 24-cysteine 145, cysteine 48-cysteine 133, cysteine 83-cysteine 99, and cysteine 95-cysteine 113. Catalysis depends on residues glutamate 53 and aspartate 71.

This sequence belongs to the glycosyl hydrolase 22 family. As to quaternary structure, monomer. Stomach-specific.

The catalysed reaction is Hydrolysis of (1-&gt;4)-beta-linkages between N-acetylmuramic acid and N-acetyl-D-glucosamine residues in a peptidoglycan and between N-acetyl-D-glucosamine residues in chitodextrins.. Lysozymes have primarily a bacteriolytic function; those in tissues and body fluids are associated with the monocyte-macrophage system and enhance the activity of immunoagents. This Bos taurus (Bovine) protein is Lysozyme C-3 (LYZ3).